Reading from the N-terminus, the 158-residue chain is Phosphopantetheine adenylyltransferase (158 aa).

Ser9 contributes to the substrate binding site. Residues 9–10 and His17 contribute to the ATP site; that span reads SF. The substrate site is built by Lys41, Thr73, and Arg87. ATP is bound by residues 88-90, Glu98, and 122-128; these read GLR and NQNISSS.

The protein belongs to the bacterial CoaD family. Homohexamer. It depends on Mg(2+) as a cofactor.

Its subcellular location is the cytoplasm. The enzyme catalyses (R)-4'-phosphopantetheine + ATP + H(+) = 3'-dephospho-CoA + diphosphate. Its pathway is cofactor biosynthesis; coenzyme A biosynthesis; CoA from (R)-pantothenate: step 4/5. Functionally, reversibly transfers an adenylyl group from ATP to 4'-phosphopantetheine, yielding dephospho-CoA (dPCoA) and pyrophosphate. This is Phosphopantetheine adenylyltransferase from Leuconostoc citreum (strain KM20).